The sequence spans 427 residues: Glutamate-1-semialdehyde 2,1-aminomutase (427 aa).

Position 265 is an N6-(pyridoxal phosphate)lysine (lysine 265).

The protein belongs to the class-III pyridoxal-phosphate-dependent aminotransferase family. HemL subfamily. As to quaternary structure, homodimer. It depends on pyridoxal 5'-phosphate as a cofactor.

It localises to the cytoplasm. The enzyme catalyses (S)-4-amino-5-oxopentanoate = 5-aminolevulinate. Its pathway is porphyrin-containing compound metabolism; protoporphyrin-IX biosynthesis; 5-aminolevulinate from L-glutamyl-tRNA(Glu): step 2/2. The sequence is that of Glutamate-1-semialdehyde 2,1-aminomutase from Burkholderia orbicola (strain MC0-3).